We begin with the raw amino-acid sequence, 144 residues long: Aklanonic acid methyl ester cyclase AcmA (144 aa).

Substrate is bound by residues Asn51 and Gln105.

Belongs to the polyketide cyclase DnrD family. As to quaternary structure, homotetramer.

The catalysed reaction is methyl aklanonate = aklaviketone. Its pathway is antibiotic biosynthesis; daunorubicin biosynthesis. It participates in antibiotic biosynthesis; carminomycin biosynthesis. The protein operates within antibiotic biosynthesis; rhodomycin biosynthesis. It functions in the pathway antibiotic biosynthesis; aclacinomycin biosynthesis. Involved in the biosynthesis of aklavinone which is an important precursor common to the formation of the clinically significant anthracyclines such as carminomycin, daunorubicin (daunomycin), rhodomycin, aclacinomycin T (aklavin) and aclacinomycin A (aclarubicin). These compounds are aromatic polyketide antibiotics that exhibit high cytotoxicity and are widely applied in the chemotherapy of a variety of cancers. Catalyzes the cyclization of aklanonic acid methyl ester to yield aklaviketone. It is also able to use nogalonic acid methyl ester as substrate, but produces exclusively auraviketone with C9-R stereochemistry. This Streptomyces galilaeus protein is Aklanonic acid methyl ester cyclase AcmA (acma).